The sequence spans 878 residues: Alanine--tRNA ligase (878 aa).

Zn(2+)-binding residues include His568, His572, Cys669, and His673.

This sequence belongs to the class-II aminoacyl-tRNA synthetase family. Zn(2+) serves as cofactor.

It is found in the cytoplasm. It catalyses the reaction tRNA(Ala) + L-alanine + ATP = L-alanyl-tRNA(Ala) + AMP + diphosphate. Its function is as follows. Catalyzes the attachment of alanine to tRNA(Ala) in a two-step reaction: alanine is first activated by ATP to form Ala-AMP and then transferred to the acceptor end of tRNA(Ala). Also edits incorrectly charged Ser-tRNA(Ala) and Gly-tRNA(Ala) via its editing domain. This Polaromonas sp. (strain JS666 / ATCC BAA-500) protein is Alanine--tRNA ligase.